Consider the following 201-residue polypeptide: MQRLPEPLKALVEQLSRLPGLGPKSALRLAMTLLKWPASETRRLGRAVHDLRDNLHLCGRCGALTDVDPCGICTDPARSGETLCLVSEWDSLLTLEEGGFYKGQYLILGGLLAPLDNLHADSLELDRLTKRMAEGTVREVVMALGTTVEAENTATYIRNMIVRQYPQVRVTRLAQGIPLGSEVKFMDRETLRQSMQYRQDL.

A C4-type zinc finger spans residues 58 to 73 (CGRCGALTDVDPCGIC). One can recognise a Toprim domain in the interval 81–178 (ETLCLVSEWD…RVTRLAQGIP (98 aa)).

This sequence belongs to the RecR family.

May play a role in DNA repair. It seems to be involved in an RecBC-independent recombinational process of DNA repair. It may act with RecF and RecO. The polypeptide is Recombination protein RecR (Nitratidesulfovibrio vulgaris (strain DSM 19637 / Miyazaki F) (Desulfovibrio vulgaris)).